The sequence spans 430 residues: Tyrosine--tRNA ligase (430 aa).

An L-tyrosine-binding site is contributed by tyrosine 32. The 'HIGH' region motif lies at 37 to 46; it reads PTADSLHIGH. The L-tyrosine site is built by tyrosine 172 and glutamine 176. Positions 232–236 match the 'KMSKS' region motif; that stretch reads KFGKT. Lysine 235 is an ATP binding site. Residues 362-429 enclose the S4 RNA-binding domain; sequence VKAVDLFVDN…GKKNYYLIIA (68 aa).

This sequence belongs to the class-I aminoacyl-tRNA synthetase family. TyrS type 1 subfamily. In terms of assembly, homodimer.

The protein resides in the cytoplasm. The enzyme catalyses tRNA(Tyr) + L-tyrosine + ATP = L-tyrosyl-tRNA(Tyr) + AMP + diphosphate + H(+). Its function is as follows. Catalyzes the attachment of tyrosine to tRNA(Tyr) in a two-step reaction: tyrosine is first activated by ATP to form Tyr-AMP and then transferred to the acceptor end of tRNA(Tyr). The sequence is that of Tyrosine--tRNA ligase from Bacteroides fragilis (strain YCH46).